The following is a 194-amino-acid chain: WASH complex subunit 3 (194 aa).

The residue at position 1 (Met-1) is an N-acetylmethionine. Positions 46-74 form a coiled coil; the sequence is TVCEEKLADLSLRIQQIETTLNILDAKLS. 2 disordered regions span residues 93–121 and 159–194; these read SVTN…QESE and EGLD…SFSD. Over residues 103 to 121 the composition is skewed to polar residues; the sequence is TSEQPQQNSTQDSGLQESE.

This sequence belongs to the CCDC53 family. Component of the WASH core complex also described as WASH regulatory complex (SHRC) composed of WASH (WASHC1, WASH2P or WASH3P), WASHC2 (WASHC2A or WASHC2C), WASHC3, WASHC4 and WASHC5. The WASH core complex associates via WASHC2 with the F-actin-capping protein dimer (formed by CAPZA1, CAPZA2 or CAPZA3 and CAPZB) in a transient or substoichiometric manner which was initially described as WASH complex.

The protein localises to the early endosome. In terms of biological role, acts as a component of the WASH core complex that functions as a nucleation-promoting factor (NPF) at the surface of endosomes, where it recruits and activates the Arp2/3 complex to induce actin polymerization, playing a key role in the fission of tubules that serve as transport intermediates during endosome sorting. The chain is WASH complex subunit 3 from Homo sapiens (Human).